A 96-amino-acid chain; its full sequence is Large ribosomal subunit protein bL27 (96 aa).

Positions 1–9 are excised as a propeptide; that stretch reads MLRLDLQFF. The segment at 1 to 36 is disordered; that stretch reads MLRLDLQFFSTKKGQGSSKNGRDSESKRLGSKRADG. The span at 8–19 shows a compositional bias: polar residues; the sequence is FFSTKKGQGSSK. Residues 20-35 are compositionally biased toward basic and acidic residues; sequence NGRDSESKRLGSKRAD.

Belongs to the bacterial ribosomal protein bL27 family. Post-translationally, the N-terminus is cleaved by ribosomal processing cysteine protease Prp.

This is Large ribosomal subunit protein bL27 from Oceanobacillus iheyensis (strain DSM 14371 / CIP 107618 / JCM 11309 / KCTC 3954 / HTE831).